A 465-amino-acid polypeptide reads, in one-letter code: Glutamyl-tRNA reductase 2 (465 aa).

Substrate contacts are provided by residues 62-65, serine 122, 127-129, and glutamine 133; these read TCNR and EGQ. Cysteine 63 serves as the catalytic Nucleophile. 204 to 209 lines the NADP(+) pocket; sequence GAGKMG.

The protein belongs to the glutamyl-tRNA reductase family.

It localises to the plastid. The protein resides in the chloroplast. The catalysed reaction is (S)-4-amino-5-oxopentanoate + tRNA(Glu) + NADP(+) = L-glutamyl-tRNA(Glu) + NADPH + H(+). It participates in porphyrin-containing compound metabolism; protoporphyrin-IX biosynthesis; 5-aminolevulinate from L-glutamyl-tRNA(Glu): step 1/2. In terms of biological role, catalyzes the NADPH-dependent reduction of glutamyl-tRNA(Glu) to glutamate 1-semialdehyde (GSA). The chain is Glutamyl-tRNA reductase 2 (HEMA2) from Hordeum vulgare (Barley).